The chain runs to 871 residues: Probable receptor-like protein kinase At2g21480 (871 aa).

The signal sequence occupies residues 1–39 (MEIRKKPNIPMCLVLDSSSRPFMTLLFTILLFLTGLASA). At 40–439 (VGAVGGSPTA…GQRASMGKQG (400 aa)) the chain is on the extracellular side. N-linked (GlcNAc...) asparagine glycans are attached at residues Asn-169, Asn-182, Asn-253, Asn-316, and Asn-381. Residues 440–460 (MVATAGFVMMFGAFVGLGAMV) form a helical membrane-spanning segment. The Cytoplasmic portion of the chain corresponds to 461–871 (YKWKKRPQDW…FTQFASLNGR (411 aa)). Residues 525 to 797 (FDASEIIGVG…GDVLWNLEYA (273 aa)) form the Protein kinase domain. Residues 531–539 (IGVGGFGNV) and Lys-553 contribute to the ATP site. Asp-649 serves as the catalytic Proton acceptor. The disordered stretch occupies residues 808–871 (KAEAEEVETP…FTQFASLNGR (64 aa)). The segment covering 817–839 (PKPVAVPAAAPTSPAATTAAASE) has biased composition (low complexity). Residues 854–871 (DQHSGTTMFTQFASLNGR) are compositionally biased toward polar residues.

This sequence belongs to the protein kinase superfamily. Ser/Thr protein kinase family.

It localises to the membrane. The chain is Probable receptor-like protein kinase At2g21480 from Arabidopsis thaliana (Mouse-ear cress).